A 409-amino-acid polypeptide reads, in one-letter code: MPKVTVLDVRLYGEPVSTLTNLQDGRTIFAFNEAYIEDEKRPTLSLSLKDPFGALITKFRPYNMVVPPFFSNLLPEGPLRKYLADRAGVKPSREFLLLWMLGRDLPGAVTVHPSEGDDAPPDDEQAIVEARPNALRFSLAGVQLKFSAFKNDKKGGGLTIPAEGTGGSWIVKLPSQQYSGVPENEFAMMTIARMMGMDVPELQLVDLDAVSGLPQGVGELHGQALAIKRFDRTPEGAVHIEDFAQVFGVFPDHKYDKGNYRMIGRVLGIETSTADVAEFIRRLVFSTLIGNGDMHLKNWSLIYPDRRTPALSPAYDLLSTIPYIEGEDTAALNFSRTKKMAALSKDELAHLAAKAELSEKLVIDTARETVERFRAVWEAEKKNLPMAAKVADTIDTHAPTVELYREFAK.

Aspartate 293 acts as the Proton acceptor in catalysis.

Belongs to the HipA Ser/Thr kinase family.

In Sinorhizobium fredii (strain NBRC 101917 / NGR234), this protein is Putative kinase Y4dM.